Consider the following 105-residue polypeptide: Protein ORFg in retron Ec67 (105 aa).

This is Protein ORFg in retron Ec67 from Escherichia coli.